A 245-amino-acid polypeptide reads, in one-letter code: Tetraspanin-6 (245 aa).

Topologically, residues methionine 1–serine 19 are cytoplasmic. A helical membrane pass occupies residues valine 20 to isoleucine 40. Over tryptophan 41–asparagine 59 the chain is Extracellular. Residues valine 60–phenylalanine 80 traverse the membrane as a helical segment. Residues alanine 81–tyrosine 93 are Cytoplasmic-facing. The chain crosses the membrane as a helical span at residues alanine 94 to phenylalanine 114. The Extracellular portion of the chain corresponds to arginine 115–glutamate 208. Asparagine 134 carries an N-linked (GlcNAc...) asparagine glycan. Residues methionine 209 to leucine 229 traverse the membrane as a helical segment. At alanine 230–valine 245 the chain is on the cytoplasmic side.

The protein belongs to the tetraspanin (TM4SF) family.

The protein resides in the membrane. The polypeptide is Tetraspanin-6 (TSPAN6) (Homo sapiens (Human)).